We begin with the raw amino-acid sequence, 209 residues long: LexA repressor (209 aa).

The segment at residues 28-48 (RAEIAKELGFRSANAAEEHLK) is a DNA-binding region (H-T-H motif). Residues S126 and K163 each act as for autocatalytic cleavage activity in the active site.

The protein belongs to the peptidase S24 family. In terms of assembly, homodimer.

It catalyses the reaction Hydrolysis of Ala-|-Gly bond in repressor LexA.. Represses a number of genes involved in the response to DNA damage (SOS response), including recA and lexA. In the presence of single-stranded DNA, RecA interacts with LexA causing an autocatalytic cleavage which disrupts the DNA-binding part of LexA, leading to derepression of the SOS regulon and eventually DNA repair. This Vibrio cholerae serotype O1 (strain ATCC 39541 / Classical Ogawa 395 / O395) protein is LexA repressor.